A 1073-amino-acid polypeptide reads, in one-letter code: uncharacterized protein (1073 aa).

The first 36 residues, 1–36 (MAEIIHHSNVFTWAFHVSEYDGAPLLLLGSFSSVAS), serve as a signal peptide directing secretion. Asparagine 132 carries N-linked (GlcNAc...) asparagine glycosylation. 392–399 (ATAGIGKS) contacts ATP. N-linked (GlcNAc...) asparagine glycans are attached at residues asparagine 544, asparagine 632, asparagine 703, asparagine 732, and asparagine 953.

This is an uncharacterized protein from Schizosaccharomyces pombe (strain 972 / ATCC 24843) (Fission yeast).